Here is a 108-residue protein sequence, read N- to C-terminus: uncharacterized protein (108 aa).

Thr-56 is subject to Phosphothreonine. Residues 89–108 are disordered; that stretch reads AQAKGTEQAEALKKGTSKWF.

The protein resides in the cytoplasm. This is an uncharacterized protein from Schizosaccharomyces pombe (strain 972 / ATCC 24843) (Fission yeast).